We begin with the raw amino-acid sequence, 217 residues long: UPF0502 protein VF_A0604 (217 aa).

Belongs to the UPF0502 family.

The sequence is that of UPF0502 protein VF_A0604 from Aliivibrio fischeri (strain ATCC 700601 / ES114) (Vibrio fischeri).